Consider the following 286-residue polypeptide: Polyamine aminopropyltransferase (286 aa).

One can recognise a PABS domain in the interval 5–238 (TMWHETLHDQ…GIMTFAWATD (234 aa)). S-methyl-5'-thioadenosine is bound at residue Gln-33. Residues His-64 and Asp-88 each coordinate spermidine. S-methyl-5'-thioadenosine is bound by residues Glu-108 and 140-141 (DG). Asp-158 serves as the catalytic Proton acceptor. Spermidine is bound at residue 158 to 161 (DCTD). Pro-165 provides a ligand contact to S-methyl-5'-thioadenosine.

Belongs to the spermidine/spermine synthase family. In terms of assembly, homodimer or homotetramer.

The protein resides in the cytoplasm. The catalysed reaction is S-adenosyl 3-(methylsulfanyl)propylamine + putrescine = S-methyl-5'-thioadenosine + spermidine + H(+). It functions in the pathway amine and polyamine biosynthesis; spermidine biosynthesis; spermidine from putrescine: step 1/1. Functionally, catalyzes the irreversible transfer of a propylamine group from the amino donor S-adenosylmethioninamine (decarboxy-AdoMet) to putrescine (1,4-diaminobutane) to yield spermidine. In Salmonella enteritidis PT4 (strain P125109), this protein is Polyamine aminopropyltransferase.